The primary structure comprises 90 residues: YcgL domain-containing protein YE2368 (90 aa).

The 85-residue stretch at 1 to 85 (MLCAIYRSPK…PPESLLKMHL (85 aa)) folds into the YcgL domain.

The sequence is that of YcgL domain-containing protein YE2368 from Yersinia enterocolitica serotype O:8 / biotype 1B (strain NCTC 13174 / 8081).